A 112-amino-acid chain; its full sequence is T cell receptor alpha variable 41 (112 aa).

The signal sequence occupies residues 1-21; that stretch reads MVKIRQFLLAILWLQLSCVSA. Residues 24 to 112 form the Ig-like domain; that stretch reads NEVEQSPQNL…DSAVYICAVR (89 aa). N-linked (GlcNAc...) asparagine glycosylation is found at Asn32 and Asn44. A disulfide bridge connects residues Cys45 and Cys109.

In terms of assembly, alpha-beta TR is a heterodimer composed of an alpha and beta chain; disulfide-linked. The alpha-beta TR is associated with the transmembrane signaling CD3 coreceptor proteins to form the TR-CD3 (TcR or TCR). The assembly of alpha-beta TR heterodimers with CD3 occurs in the endoplasmic reticulum where a single alpha-beta TR heterodimer associates with one CD3D-CD3E heterodimer, one CD3G-CD3E heterodimer and one CD247 homodimer forming a stable octameric structure. CD3D-CD3E and CD3G-CD3E heterodimers preferentially associate with TR alpha and TR beta chains, respectively. The association of the CD247 homodimer is the last step of TcR assembly in the endoplasmic reticulum and is required for transport to the cell surface.

Its subcellular location is the cell membrane. Functionally, v region of the variable domain of T cell receptor (TR) alpha chain that participates in the antigen recognition. Alpha-beta T cell receptors are antigen specific receptors which are essential to the immune response and are present on the cell surface of T lymphocytes. Recognize peptide-major histocompatibility (MH) (pMH) complexes that are displayed by antigen presenting cells (APC), a prerequisite for efficient T cell adaptive immunity against pathogens. Binding of alpha-beta TR to pMH complex initiates TR-CD3 clustering on the cell surface and intracellular activation of LCK that phosphorylates the ITAM motifs of CD3G, CD3D, CD3E and CD247 enabling the recruitment of ZAP70. In turn ZAP70 phosphorylates LAT, which recruits numerous signaling molecules to form the LAT signalosome. The LAT signalosome propagates signal branching to three major signaling pathways, the calcium, the mitogen-activated protein kinase (MAPK) kinase and the nuclear factor NF-kappa-B (NF-kB) pathways, leading to the mobilization of transcription factors that are critical for gene expression and essential for T cell growth and differentiation. The T cell repertoire is generated in the thymus, by V-(D)-J rearrangement. This repertoire is then shaped by intrathymic selection events to generate a peripheral T cell pool of self-MH restricted, non-autoaggressive T cells. Post-thymic interaction of alpha-beta TR with the pMH complexes shapes TR structural and functional avidity. The polypeptide is T cell receptor alpha variable 41 (Homo sapiens (Human)).